The following is a 426-amino-acid chain: Tol-Pal system protein TolB (426 aa).

The signal sequence occupies residues 1–25 (MSITPSLSRRTVMSLLAAGLSPAFA).

Belongs to the TolB family. As to quaternary structure, the Tol-Pal system is composed of five core proteins: the inner membrane proteins TolA, TolQ and TolR, the periplasmic protein TolB and the outer membrane protein Pal. They form a network linking the inner and outer membranes and the peptidoglycan layer.

The protein resides in the periplasm. Part of the Tol-Pal system, which plays a role in outer membrane invagination during cell division and is important for maintaining outer membrane integrity. This Polaromonas sp. (strain JS666 / ATCC BAA-500) protein is Tol-Pal system protein TolB.